A 483-amino-acid chain; its full sequence is MLTLDTLNVMLAVSEEGLIEEMIIALLASPQLAVFFEKFPRLKAAITDDVPRWREALRSRLKDARVPPELTEEVMCYQQSQLLSTPQFIVQLPQILDLLHRLNSPWAEQARQLVDANSTITSALHTLFLQRWRLSLIVQATTLNQQLLEEEREQLLSEVQERMTLSGQLEPILADNNTAAGRLWDMSAGQLKRGDYQLIVKYGEFLNEQPELKRLAEQLGRSREAKSIPRNDAQMEAFRTMVREPATVPEQVDGLQQSDDILRLLPPELATLGITELEYEFYRRLVEKQLLTYRLHGESWREKVIERPVVHKDYDEQPRGPFIVCVDTSGSMGGFNEQCAKAFCLALMRIALAENRRCYIMLFSTEIVRYELSGPQGIEQAIRFLSQQFRGGTDLASCFRAIMERLQSREWFDADAVVISDFIAQRLPDDVTSKVKELQRVHQHRFHAVAMSAHGKPGIMRIFDHIWRFDTGMRSRLLRRWRR.

This sequence belongs to the ViaA family. As to quaternary structure, homodimer. Interacts with RavA.

It is found in the cytoplasm. Functionally, component of the RavA-ViaA chaperone complex, which may act on the membrane to optimize the function of some of the respiratory chains. ViaA stimulates the ATPase activity of RavA. The chain is Regulatory protein ViaA from Escherichia coli O139:H28 (strain E24377A / ETEC).